Here is a 127-residue protein sequence, read N- to C-terminus: Glycine cleavage system H protein (127 aa).

The region spanning 24–105 is the Lipoyl-binding domain; it reads TALVGITDFA…YNDGWLVKMK (82 aa). The residue at position 65 (lysine 65) is an N6-lipoyllysine.

Belongs to the GcvH family. In terms of assembly, the glycine cleavage system is composed of four proteins: P, T, L and H. The cofactor is (R)-lipoate.

The glycine cleavage system catalyzes the degradation of glycine. The H protein shuttles the methylamine group of glycine from the P protein to the T protein. In Pelodictyon phaeoclathratiforme (strain DSM 5477 / BU-1), this protein is Glycine cleavage system H protein.